We begin with the raw amino-acid sequence, 277 residues long: Urease accessory protein UreD (277 aa).

The protein belongs to the UreD family. In terms of assembly, ureD, UreF and UreG form a complex that acts as a GTP-hydrolysis-dependent molecular chaperone, activating the urease apoprotein by helping to assemble the nickel containing metallocenter of UreC. The UreE protein probably delivers the nickel.

Its subcellular location is the cytoplasm. Functionally, required for maturation of urease via the functional incorporation of the urease nickel metallocenter. The protein is Urease accessory protein UreD of Pseudomonas putida (strain ATCC 47054 / DSM 6125 / CFBP 8728 / NCIMB 11950 / KT2440).